A 238-amino-acid chain; its full sequence is Ribosomal RNA small subunit methyltransferase G (238 aa).

S-adenosyl-L-methionine is bound by residues G77, F82, 128–129, and R146; that span reads AE. The interval 216–238 is disordered; that stretch reads KKRQTPKKYPRKPGTPNKEPLLK.

This sequence belongs to the methyltransferase superfamily. RNA methyltransferase RsmG family.

It localises to the cytoplasm. In terms of biological role, specifically methylates the N7 position of guanine in position 535 of 16S rRNA. The protein is Ribosomal RNA small subunit methyltransferase G of Macrococcus caseolyticus (strain JCSC5402) (Macrococcoides caseolyticum).